Consider the following 248-residue polypeptide: Proteasome subunit alpha (248 aa).

A disordered region spans residues 229–248; it reads LLEADGATTEAESSAEEEDE.

Belongs to the peptidase T1A family. As to quaternary structure, the 20S proteasome core is composed of 14 alpha and 14 beta subunits that assemble into four stacked heptameric rings, resulting in a barrel-shaped structure. The two inner rings, each composed of seven catalytic beta subunits, are sandwiched by two outer rings, each composed of seven alpha subunits. The catalytic chamber with the active sites is on the inside of the barrel. Has a gated structure, the ends of the cylinder being occluded by the N-termini of the alpha-subunits. Is capped by the proteasome-associated ATPase, ARC.

It localises to the cytoplasm. It participates in protein degradation; proteasomal Pup-dependent pathway. Its activity is regulated as follows. The formation of the proteasomal ATPase ARC-20S proteasome complex, likely via the docking of the C-termini of ARC into the intersubunit pockets in the alpha-rings, may trigger opening of the gate for substrate entry. Interconversion between the open-gate and close-gate conformations leads to a dynamic regulation of the 20S proteasome proteolysis activity. In terms of biological role, component of the proteasome core, a large protease complex with broad specificity involved in protein degradation. The protein is Proteasome subunit alpha of Streptomyces scabiei (strain 87.22).